Here is a 547-residue protein sequence, read N- to C-terminus: Ribosome protection protein VmlR (547 aa).

Residues 5–200 form the ABC transporter 1 domain; it reads VTLTNVSYEV…FREKKRLTQQ (196 aa). 37-44 serves as a coordination point for ATP; sequence GKNGAGKS. Residues 183–289 are antibiotic resistance domain (ARD); sequence GNYSGYMKFR…SIDTTHKTGK (107 aa). Coiled-coil stretches lie at residues 193-222 and 245-269; these read EKKR…GLAS and AKRT…AKAE. An ABC transporter 2 domain is found at 292–504; sequence LEVQNVTKAF…REELRLKLET (213 aa). ATP is bound at residue 324-331; that stretch reads GPNGSGKT. The tract at residues 483–547 is C-terminal extension (CTE); that stretch reads KQLNDVPSER…KELDHQDKKD (65 aa). The stretch at 488-543 forms a coiled coil; sequence VPSERNEREELRLKLETERQEVLGKLSFMTPNDKGYKELDQAFNELTKRIKELDHQ.

Belongs to the ABC transporter superfamily. ABCF family. ARE2 subfamily. In terms of assembly, binds within the E-site of the 70S ribosome, where it contacts ribosomal proteins L1, L5, L33-1, S7, S11, the 16 and 23S rRNAs and the acceptor arm of the P-site tRNA.

Its subcellular location is the cytoplasm. Its function is as follows. Recognizes and binds in the vacant E-site of ribosomes stalled by some peptidyltransferase center (PTC)-targeting antibiotics. Makes contact with the PTC and both ribosomal subunits. Induces conformational changes in the P-site, which allows it to dislodge the antibiotic from its PTC binding site. Binds to ribosomes either directly following translation initation or subsequent to E tRNA release during elongation. Involved in resistance to a narrow spectrum of antibiotics (the streptogramin A antibiotic virginiamycin M, the lincosamide antibiotic lincomycin and the pleuromutilin antibiotic tiamulin). In Bacillus subtilis (strain 168), this protein is Ribosome protection protein VmlR.